The primary structure comprises 229 residues: Putative N-acetylmannosamine-6-phosphate 2-epimerase (229 aa).

It belongs to the NanE family.

The catalysed reaction is an N-acyl-D-glucosamine 6-phosphate = an N-acyl-D-mannosamine 6-phosphate. The protein operates within amino-sugar metabolism; N-acetylneuraminate degradation; D-fructose 6-phosphate from N-acetylneuraminate: step 3/5. Its function is as follows. Converts N-acetylmannosamine-6-phosphate (ManNAc-6-P) to N-acetylglucosamine-6-phosphate (GlcNAc-6-P). The sequence is that of Putative N-acetylmannosamine-6-phosphate 2-epimerase from Escherichia coli O139:H28 (strain E24377A / ETEC).